The sequence spans 364 residues: Peroxisomal membrane protein PEX16 (364 aa).

At S200 the chain carries Phosphoserine.

This sequence belongs to the peroxin-16 family.

It is found in the peroxisome membrane. In terms of biological role, involved in the biogenesis of peroxisomes. The sequence is that of Peroxisomal membrane protein PEX16 (pex16) from Schizosaccharomyces pombe (strain 972 / ATCC 24843) (Fission yeast).